A 570-amino-acid polypeptide reads, in one-letter code: Formate--tetrahydrofolate ligase (570 aa).

Position 65 to 72 (65 to 72 (TPYGEGKT)) interacts with ATP.

Belongs to the formate--tetrahydrofolate ligase family.

The catalysed reaction is (6S)-5,6,7,8-tetrahydrofolate + formate + ATP = (6R)-10-formyltetrahydrofolate + ADP + phosphate. It functions in the pathway one-carbon metabolism; tetrahydrofolate interconversion. This Shewanella piezotolerans (strain WP3 / JCM 13877) protein is Formate--tetrahydrofolate ligase.